A 143-amino-acid polypeptide reads, in one-letter code: Type II secretion system core protein G (143 aa).

Positions 1–8 (MQKRRQSG) are cleaved as a propeptide — leader sequence. Residue F9 is modified to N-methylphenylalanine. Residues 9 to 29 (FTLLEVMVVIVILGILASLVV) traverse the membrane as a helical segment. The interval 70-92 (QGLDALVNKPTAAPEPRSYRDGG) is disordered.

Belongs to the GSP G family. In terms of assembly, type II secretion system is composed of four main components: the outer membrane complex, the inner membrane complex, the cytoplasmic secretion ATPase and the periplasm-spanning pseudopilus. Forms homomultimers. Post-translationally, cleaved by the prepilin peptidase. In terms of processing, methylated by prepilin peptidase at the amino group of the N-terminal phenylalanine once the leader sequence is cleaved.

It is found in the cell inner membrane. In terms of biological role, core component of the type II secretion system required for the energy-dependent secretion of extracellular factors such as proteases and toxins from the periplasm. Pseudopilin (pilin-like) protein that polymerizes to form the pseudopilus. Further polymerization triggers pseudopilus growth. This chain is Type II secretion system core protein G (exeG), found in Aeromonas hydrophila.